Consider the following 79-residue polypeptide: uncharacterized protein (79 aa).

This is an uncharacterized protein from Ovis aries (Sheep).